A 494-amino-acid chain; its full sequence is Probable cytosol aminopeptidase (494 aa).

Mn(2+) contacts are provided by Lys260 and Asp265. Lys272 is a catalytic residue. The Mn(2+) site is built by Asp283, Asp342, and Glu344. Residue Arg346 is part of the active site.

The protein belongs to the peptidase M17 family. It depends on Mn(2+) as a cofactor.

It localises to the cytoplasm. It catalyses the reaction Release of an N-terminal amino acid, Xaa-|-Yaa-, in which Xaa is preferably Leu, but may be other amino acids including Pro although not Arg or Lys, and Yaa may be Pro. Amino acid amides and methyl esters are also readily hydrolyzed, but rates on arylamides are exceedingly low.. The catalysed reaction is Release of an N-terminal amino acid, preferentially leucine, but not glutamic or aspartic acids.. Functionally, presumably involved in the processing and regular turnover of intracellular proteins. Catalyzes the removal of unsubstituted N-terminal amino acids from various peptides. The sequence is that of Probable cytosol aminopeptidase from Bacillus thuringiensis (strain Al Hakam).